Here is a 314-residue protein sequence, read N- to C-terminus: Pectin lyase (314 aa).

Residue arginine 202 is part of the active site.

It belongs to the polysaccharide lyase 1 family.

It catalyses the reaction Eliminative cleavage of (1-&gt;4)-alpha-D-galacturonan methyl ester to give oligosaccharides with 4-deoxy-6-O-methyl-alpha-D-galact-4-enuronosyl groups at their non-reducing ends.. In Pectobacterium carotovorum (Erwinia carotovora), this protein is Pectin lyase (pnl).